Consider the following 391-residue polypeptide: Multidrug resistance protein MdtL (391 aa).

The next 12 membrane-spanning stretches (helical) occupy residues 4 to 24 (FLIC…MYLV), 42 to 62 (IAFS…GKVA), 69 to 89 (PVAI…SLAE), 93 to 113 (LFLA…VVAF), 131 to 151 (LLNG…HLIM), 158 to 178 (SLFW…LFIL), 203 to 222 (FFLS…LTFV), 245 to 265 (ALTA…LGIF), 269 to 289 (TLMI…AVSP), 293 to 313 (VSLF…GVAM), 331 to 351 (LGIA…VVGI), and 356 to 376 (MLIG…MFVA).

This sequence belongs to the major facilitator superfamily. DHA1 family. MdtL (TC 2.A.1.2.22) subfamily.

It localises to the cell inner membrane. Its function is as follows. Confers resistance to chloramphenicol. The polypeptide is Multidrug resistance protein MdtL (Escherichia coli (strain SMS-3-5 / SECEC)).